The chain runs to 69 residues: uncharacterized protein (69 aa).

The 55-residue stretch at 10–64 (IRAFRKLKGYTQEGFAKALGISVSILGEIERGNRLPSAAIIQDAADVLNISADEL) folds into the HTH cro/C1-type domain. A DNA-binding region (H-T-H motif) is located at residues 21–40 (QEGFAKALGISVSILGEIER).

This is an uncharacterized protein from Bacillus subtilis (strain 168).